A 2517-amino-acid chain; its full sequence is Protein capicua homolog (2517 aa).

6 disordered regions span residues 1 to 197 (MKPM…SGSY), 300 to 325 (LSPG…HREP), 342 to 483 (PWEP…KYKK), 531 to 579 (EMEG…RGDS), 608 to 640 (SSRS…FGFR), and 658 to 767 (VRSR…FRAV). Acidic residues predominate over residues 57-67 (EEAEEGEEEEA). The segment covering 91-101 (EDPKGDGEAGR) has biased composition (basic and acidic residues). 2 stretches are compositionally biased toward low complexity: residues 158–167 (TSTRSSSTDT) and 300–313 (LSPG…LPGS). Residues 396–405 (HCEEGEEKHP) show a composition bias toward basic and acidic residues. The span at 414 to 428 (LPLPPPQLLSPPPKS) shows a compositional bias: pro residues. Residues 451–477 (GSRSSSVASLEKGTAPAARARTPLTAA) are compositionally biased toward low complexity. A compositionally biased stretch (polar residues) spans 608 to 619 (SSRSGTPSFSPV). Over residues 677-686 (DLGPHPPPPA) the composition is skewed to pro residues. Residues 698–707 (TFQTNLTFTV) are compositionally biased toward polar residues. Residues 726-735 (GAPGAGGGGA) are compositionally biased toward gly residues. 2 positions are modified to phosphoserine: Ser776 and Ser780. Disordered stretches follow at residues 812–842 (IVRN…PGRG), 955–1110 (PSQP…DHIR), 1179–1220 (CNKD…APGV), 1235–1274 (SDTK…SLDG), 1290–1347 (SGPA…TSDE), 1379–1539 (RVTD…ILQT), and 1595–1628 (IASK…RVPG). The segment at 937–955 (EPRSVAVFPWHSLVPFLAP) is interaction with ATXN1. Residues 959–981 (DPSVQPSEAQQPASHPVASNQSK) show a composition bias toward polar residues. Phosphoserine is present on residues Ser1055 and Ser1082. 3 stretches are compositionally biased toward basic and acidic residues: residues 1087 to 1110 (PKER…DHIR), 1179 to 1188 (CNKDRKKSSS), and 1200 to 1209 (GHKETRERSM). At Arg1099 the chain carries Omega-N-methylarginine. Positions 1109-1177 (IRRPMNAFMI…AHFKAHPDWK (69 aa)) form a DNA-binding region, HMG box. Ser1186 carries the post-translational modification Phosphoserine. Residues 1235–1245 (SDTKAPGSSSC) are compositionally biased toward polar residues. Ser1271 is modified (phosphoserine). Positions 1305–1323 (GAPGPFAAPGEGGALAATG) are enriched in low complexity. 3 positions are modified to phosphoserine: Ser1340, Ser1345, and Ser1405. The segment covering 1418–1430 (PLDPEPPGPPDPP) has biased composition (pro residues). Positions 1439 to 1456 (SAPSSSASSPASSSASAA) are enriched in low complexity. Polar residues predominate over residues 1457–1474 (TSFSLGSGTFKAQESGQG). A phosphoserine mark is found at Ser1609, Ser1630, and Ser1648. Arg1772 is modified (asymmetric dimethylarginine). The segment at 1799–1818 (QSVPSAPPPKAQSVSPVQAP) is disordered. The residue at position 1843 (Arg1843) is an Omega-N-methylarginine. Disordered stretches follow at residues 2039 to 2064 (AATI…FPSA), 2100 to 2342 (SFEA…AKCE), and 2430 to 2517 (AATP…ATGR). Residues 2051 to 2064 (ATATPAPTSPFPSA) show a composition bias toward low complexity. 2 stretches are compositionally biased toward pro residues: residues 2110 to 2119 (GPAPRQPLEP) and 2136 to 2145 (PTPPAPPPLP). Residues 2146-2155 (ETWTPTARSS) show a composition bias toward low complexity. Lys2177 is modified (N6-acetyllysine). The segment covering 2198-2209 (PPTPPSPAPAPA) has biased composition (pro residues). Position 2200 is a phosphothreonine (Thr2200). Ser2203 bears the Phosphoserine mark. The span at 2210-2225 (VAPGGSSESSSGRAAG) shows a compositional bias: low complexity. Residues 2249–2278 (KTFDSVDNRVLSEVDFEERFAELPEFRPEE) show a composition bias toward basic and acidic residues. Ser2260, Ser2282, Ser2287, Ser2291, Ser2298, and Ser2306 each carry phosphoserine. Thr2307 carries the phosphothreonine modification. Ser2311 and Ser2318 each carry phosphoserine. Over residues 2457 to 2469 (APTPSPAGGPDPT) the composition is skewed to pro residues. The residue at position 2504 (Ser2504) is a Phosphoserine.

In terms of assembly, found in a complex with ATXN1 and ATXN1L. As to quaternary structure, interacts with ATXN1. In terms of tissue distribution, expressed in fetal brain.

The protein localises to the nucleus. Its function is as follows. Transcriptional repressor which plays a role in development of the central nervous system (CNS). In concert with ATXN1 and ATXN1L, involved in brain development. The chain is Protein capicua homolog (CIC) from Homo sapiens (Human).